The sequence spans 188 residues: ATP synthase subunit delta (188 aa).

Belongs to the ATPase delta chain family. In terms of assembly, F-type ATPases have 2 components, F(1) - the catalytic core - and F(0) - the membrane proton channel. F(1) has five subunits: alpha(3), beta(3), gamma(1), delta(1), epsilon(1). F(0) has three main subunits: a(1), b(2) and c(10-14). The alpha and beta chains form an alternating ring which encloses part of the gamma chain. F(1) is attached to F(0) by a central stalk formed by the gamma and epsilon chains, while a peripheral stalk is formed by the delta and b chains.

The protein localises to the cell inner membrane. Functionally, f(1)F(0) ATP synthase produces ATP from ADP in the presence of a proton or sodium gradient. F-type ATPases consist of two structural domains, F(1) containing the extramembraneous catalytic core and F(0) containing the membrane proton channel, linked together by a central stalk and a peripheral stalk. During catalysis, ATP synthesis in the catalytic domain of F(1) is coupled via a rotary mechanism of the central stalk subunits to proton translocation. This protein is part of the stalk that links CF(0) to CF(1). It either transmits conformational changes from CF(0) to CF(1) or is implicated in proton conduction. The chain is ATP synthase subunit delta from Rhizobium meliloti (strain 1021) (Ensifer meliloti).